The following is a 299-amino-acid chain: Dye-decolorizing peroxidase YfeX (299 aa).

The active-site Proton acceptor is the Asp143. A heme-binding site is contributed by His215.

Belongs to the DyP-type peroxidase family. It depends on heme b as a cofactor.

It is found in the cytoplasm. In terms of biological role, has both general peroxidase activity and dye-decolorizing activity. Can catalyze the oxidation of both protoporphyrinogen IX and coproporphyrinogen III to their corresponding porphyrins. Also efficiently decolorizes the dyes alizarin red and Cibacron blue F3GA. The protein is Dye-decolorizing peroxidase YfeX (yfeX) of Escherichia coli (strain K12).